The primary structure comprises 231 residues: ATP phosphoribosyltransferase (231 aa).

This sequence belongs to the ATP phosphoribosyltransferase family. Short subfamily. Heteromultimer composed of HisG and HisZ subunits.

The protein localises to the cytoplasm. The catalysed reaction is 1-(5-phospho-beta-D-ribosyl)-ATP + diphosphate = 5-phospho-alpha-D-ribose 1-diphosphate + ATP. It functions in the pathway amino-acid biosynthesis; L-histidine biosynthesis; L-histidine from 5-phospho-alpha-D-ribose 1-diphosphate: step 1/9. Functionally, catalyzes the condensation of ATP and 5-phosphoribose 1-diphosphate to form N'-(5'-phosphoribosyl)-ATP (PR-ATP). Has a crucial role in the pathway because the rate of histidine biosynthesis seems to be controlled primarily by regulation of HisG enzymatic activity. This Rhizobium etli (strain CIAT 652) protein is ATP phosphoribosyltransferase (hisG).